Reading from the N-terminus, the 378-residue chain is Alpha-galactosidase (378 aa).

A signal peptide spans 1–15; sequence MVKSPGTEDYTRRSL. Cystine bridges form between Cys-36–Cys-68 and Cys-116–Cys-147. The active-site Nucleophile is Asp-145. 178–182 contributes to the substrate binding site; it reads EWGEE. The Proton donor role is filled by Asp-200.

Belongs to the glycosyl hydrolase 27 family.

The enzyme catalyses Hydrolysis of terminal, non-reducing alpha-D-galactose residues in alpha-D-galactosides, including galactose oligosaccharides, galactomannans and galactolipids.. Preferentially cleaves alpha-1,3 and alpha-1,4 glycoside linkages. Involved in the hydrolysis of the galactomannan, it splits alpha-linked galactose moieties. It is particularly suitable for the hydrolysis of guar gum to a gum with improved gelling properties. Can cleave terminal alpha-1,3-linked galactose residues responsible for blood group B specificity from the surface of erythrocytes thereby converting these cells serologically to group O. The chain is Alpha-galactosidase from Coffea arabica (Arabian coffee).